The following is a 103-amino-acid chain: Small ribosomal subunit protein uS14c (103 aa).

This sequence belongs to the universal ribosomal protein uS14 family. Part of the 30S ribosomal subunit.

The protein localises to the plastid. It is found in the chloroplast. Its function is as follows. Binds 16S rRNA, required for the assembly of 30S particles. The protein is Small ribosomal subunit protein uS14c of Oryza nivara (Indian wild rice).